The chain runs to 290 residues: UPF0507 protein YML003W (290 aa).

It belongs to the UPF0507 family.

The chain is UPF0507 protein YML003W from Saccharomyces cerevisiae (strain ATCC 204508 / S288c) (Baker's yeast).